Here is a 455-residue protein sequence, read N- to C-terminus: Beta-1,4-mannosyltransferase bre-3 (455 aa).

This sequence belongs to the glycosyltransferase 2 family. As to expression, endothelial cells.

The protein localises to the cytoplasm. It participates in protein modification; protein glycosylation. In terms of biological role, glycosyltransferase with a proposed role in glycosphingolipid biosynthesis. Involved in susceptibility to pore-forming crystal toxins in conjunction with bre-1, bre-2, bre-4 and bre-5. Involved in resistance to the nematotoxic C.cinerea galectin Cgl2. Has a role in determining brood size. The chain is Beta-1,4-mannosyltransferase bre-3 (bre-3) from Caenorhabditis elegans.